Reading from the N-terminus, the 157-residue chain is Nascent polypeptide-associated complex subunit alpha (157 aa).

In terms of domain architecture, NAC-A/B spans 6 to 71; it reads TTDESHIHKT…LGSPVNLHQL (66 aa). Positions 81–107 are enriched in basic and acidic residues; sequence SSKDQEGPGLYDEIHSDPQEDGVKEAE. Residues 81 to 116 form a disordered region; it reads SSKDQEGPGLYDEIHSDPQEDGVKEAEEITVDPSDE. One can recognise a UBA domain in the interval 118–157; the sequence is LSEEDIKLISSQVKASRNDIIKALVESEYDVVDAMMKLTK.

This sequence belongs to the NAC-alpha family.

It localises to the cytoplasm. Its subcellular location is the nucleus. Its function is as follows. May be involved in mitochondrial protein import by enhancing productive ribosome interactions with the outer mitochondrial membrane and blocks the inappropriate interaction of ribosomes translating non-secretory nascent polypeptides with translocation sites in the membrane of the endoplasmic reticulum. EGD2 may also be involved in transcription regulation. This is Nascent polypeptide-associated complex subunit alpha (EGD2) from Encephalitozoon cuniculi (strain GB-M1) (Microsporidian parasite).